A 250-amino-acid polypeptide reads, in one-letter code: 2-C-methyl-D-erythritol 4-phosphate cytidylyltransferase (250 aa).

Belongs to the IspD/TarI cytidylyltransferase family. IspD subfamily.

The catalysed reaction is 2-C-methyl-D-erythritol 4-phosphate + CTP + H(+) = 4-CDP-2-C-methyl-D-erythritol + diphosphate. It participates in isoprenoid biosynthesis; isopentenyl diphosphate biosynthesis via DXP pathway; isopentenyl diphosphate from 1-deoxy-D-xylulose 5-phosphate: step 2/6. Its function is as follows. Catalyzes the formation of 4-diphosphocytidyl-2-C-methyl-D-erythritol from CTP and 2-C-methyl-D-erythritol 4-phosphate (MEP). This Streptomyces avermitilis (strain ATCC 31267 / DSM 46492 / JCM 5070 / NBRC 14893 / NCIMB 12804 / NRRL 8165 / MA-4680) protein is 2-C-methyl-D-erythritol 4-phosphate cytidylyltransferase.